The primary structure comprises 142 residues: Large ribosomal subunit protein uL13 (142 aa).

This sequence belongs to the universal ribosomal protein uL13 family. Part of the 50S ribosomal subunit.

Its function is as follows. This protein is one of the early assembly proteins of the 50S ribosomal subunit, although it is not seen to bind rRNA by itself. It is important during the early stages of 50S assembly. The polypeptide is Large ribosomal subunit protein uL13 (Ectopseudomonas mendocina (strain ymp) (Pseudomonas mendocina)).